Here is a 464-residue protein sequence, read N- to C-terminus: MVLAFWLAFFTYTWITLMLDASAVKEPHQQCLSSPKQTRIRETRMRKDDLTKVWPLKREQLLHIEDHDFSTRPGFGGSPVPVGIDVQVESIDSISEVNMDFTMTFYLRHYWKDERLSFPSTTNKSMTFDRRLIQKIWVPDIFFVHSKRSFIHDTTVENIMLRVHPDGNVLFSLRITVSAMCFMDFSRFPLDTQNCSLELESYAYNEEDLMLYWKHGNKSLNTEEHISLSQFFIEEFSASSGLAFYSSTGWYYRLFINFVLRRHIFFFVLQTYFPAMLMVMLSWVSFWIDRRAVPARVSLGITTVLTMSTIVTGVSASMPQVSYVKAVDVYMWVSSLFVFLSVIEYAAVNYLTTVEEWKQLNRRGKISGMYNIDAVQAMAFDGCYHDGETDVDQTSFFLHSEEDSMRTKFTGSPCADSSQIKRKSLGGNVGRIILENNHVIDTYSRIVFPVVYIIFNLFYWGIYV.

Residues 1 to 15 (MVLAFWLAFFTYTWI) form the signal peptide. Over 16 to 263 (TLMLDASAVK…LFINFVLRRH (248 aa)) the chain is Extracellular. Arg-108 serves as a coordination point for 4-aminobutanoate. A glycan (N-linked (GlcNAc...) asparagine) is linked at Asn-123. Ser-172 is a binding site for 4-aminobutanoate. An intrachain disulfide couples Cys-181 to Cys-195. An N-linked (GlcNAc...) asparagine glycan is attached at Asn-194. Residue Glu-200 participates in 4-aminobutanoate binding. Residues 264–284 (IFFFVLQTYFPAMLMVMLSWV) traverse the membrane as a helical segment. At 285 to 296 (SFWIDRRAVPAR) the chain is on the cytoplasmic side. Residues 297–317 (VSLGITTVLTMSTIVTGVSAS) form a helical membrane-spanning segment. Over 318–328 (MPQVSYVKAVD) the chain is Extracellular. Residues 329-349 (VYMWVSSLFVFLSVIEYAAVN) traverse the membrane as a helical segment. The tract at residues 344–445 (EYAAVNYLTT…NNHVIDTYSR (102 aa)) is interaction with SQSTM1. Residues 350–443 (YLTTVEEWKQ…LENNHVIDTY (94 aa)) lie on the Cytoplasmic side of the membrane. A helical membrane pass occupies residues 444–464 (SRIVFPVVYIIFNLFYWGIYV).

The protein belongs to the ligand-gated ion channel (TC 1.A.9) family. Gamma-aminobutyric acid receptor (TC 1.A.9.5) subfamily. GABRR3 sub-subfamily. Three rho subunits (rho-1/GBRR1, rho-2/GBRR2 and rho-3/GBRR3) coassemble either to form functional homopentamers or heteropentamers. Forms a ternary complex with SQSTM1 and PRKCZ. Expressed in retina.

It localises to the postsynaptic cell membrane. It is found in the cell membrane. It carries out the reaction chloride(in) = chloride(out). Activated by agonists in the following the potency order: muscimol &gt; TACP &gt; TACA &gt; thiomuscimol &gt; CAMP &gt; CACA, when forming a homopentamer. Inhibited by TPMPA, a rho-specific antagonist, when forming a homopentamer. Inhibited antagonists in the following the potency order: TAMP = TPMPA &gt; P4MPA = THIP &gt; 14AA &gt; 3-APA, when forming a homopentamer. Its function is as follows. Rho subunit of the pentameric ligand-gated chloride channels responsible for mediating the effects of gamma-aminobutyric acid (GABA), the major inhibitory neurotransmitter in the brain. Rho-containing GABA-gated chloride channels are a subclass of GABA(A) receptors (GABAARs) entirely composed of rho subunits, where GABA molecules bind at the rho intersubunit interfaces. When activated by GABA, rho-GABAARs selectively allow the flow of chloride anions across the cell membrane down their electrochemical gradient. The chain is Gamma-aminobutyric acid receptor subunit rho-3 from Rattus norvegicus (Rat).